The primary structure comprises 403 residues: uncharacterized protein (403 aa).

Transmembrane regions (helical) follow at residues 31 to 51 (FLIA…IGSF), 186 to 206 (LPIG…GIIV), 238 to 258 (ISAV…PIII), 268 to 288 (LAIF…SLLC), 303 to 323 (LISP…TIMV), and 355 to 375 (LIEI…SFIL).

It to B.subtilis YhaP.

It localises to the cell membrane. This is an uncharacterized protein from Methanocaldococcus jannaschii (strain ATCC 43067 / DSM 2661 / JAL-1 / JCM 10045 / NBRC 100440) (Methanococcus jannaschii).